Here is a 359-residue protein sequence, read N- to C-terminus: L-seryl-tRNA(Sec) kinase (359 aa).

Residue 25–32 (GLPAAGKS) participates in ATP binding.

Belongs to the L-seryl-tRNA(Sec) kinase family. It depends on Mg(2+) as a cofactor.

The catalysed reaction is L-seryl-tRNA(Sec) + ATP = O-phospho-L-seryl-tRNA(Sec) + ADP. The protein operates within aminoacyl-tRNA biosynthesis; selenocysteinyl-tRNA(Sec) biosynthesis; selenocysteinyl-tRNA(Sec) from L-seryl-tRNA(Sec) (archaeal/eukaryal route): step 1/2. Functionally, specifically phosphorylates seryl-tRNA(Sec) to O-phosphoseryl-tRNA(Sec), an activated intermediate for selenocysteine biosynthesis. No activity with other tRNAs has been detected. The protein is L-seryl-tRNA(Sec) kinase (Pstk) of Mus musculus (Mouse).